Here is an 85-residue protein sequence, read N- to C-terminus: MNYLVFFSLALLLMTGVESVRDGYIADDKNCAYFCGRNAYCDDECKKKGAESGYCQWAGVYGNACWCYKLPDKVPIRVPGKCNGG.

The first 19 residues, 1–19, serve as a signal peptide directing secretion; it reads MNYLVFFSLALLLMTGVES. The LCN-type CS-alpha/beta domain occupies 21 to 83; that stretch reads RDGYIADDKN…VPIRVPGKCN (63 aa). Cystine bridges form between Cys-31–Cys-82, Cys-35–Cys-55, Cys-41–Cys-65, and Cys-45–Cys-67.

It belongs to the long (4 C-C) scorpion toxin superfamily. Sodium channel inhibitor family. Alpha subfamily. In terms of tissue distribution, expressed by the venom gland.

It is found in the secreted. In terms of biological role, alpha toxins bind voltage-independently at site-3 of sodium channels (Nav) and inhibit the inactivation of the activated channels, thereby blocking neuronal transmission. This is Toxin BmKa3 from Olivierus martensii (Manchurian scorpion).